A 21-amino-acid polypeptide reads, in one-letter code: Glucose-1-phosphate adenylyltransferase large subunit (21 aa).

Residues 1-21 are disordered; it reads SVTADNASETKVREIGQEKSS. The span at 8 to 21 shows a compositional bias: basic and acidic residues; sequence SETKVREIGQEKSS.

Belongs to the bacterial/plant glucose-1-phosphate adenylyltransferase family. As to quaternary structure, heterotetramer.

The protein localises to the plastid. The protein resides in the chloroplast. It is found in the amyloplast. It carries out the reaction alpha-D-glucose 1-phosphate + ATP + H(+) = ADP-alpha-D-glucose + diphosphate. The protein operates within glycan biosynthesis; starch biosynthesis. Activated by 3'phosphoglycerate, inhibited by orthophosphate. Allosteric regulation. This protein plays a role in synthesis of starch. It catalyzes the synthesis of the activated glycosyl donor, ADP-glucose from Glc-1-P and ATP. The chain is Glucose-1-phosphate adenylyltransferase large subunit from Spinacia oleracea (Spinach).